We begin with the raw amino-acid sequence, 519 residues long: Ribose import ATP-binding protein RbsA 2 (519 aa).

ABC transporter domains follow at residues 15–252 (FRLR…VGRP) and 262–506 (HEPG…TGVR). 47 to 54 (GENGAGKS) contacts ATP.

It belongs to the ABC transporter superfamily. Ribose importer (TC 3.A.1.2.1) family. In terms of assembly, the complex is composed of an ATP-binding protein (RbsA), two transmembrane proteins (RbsC) and a solute-binding protein (RbsB).

The protein localises to the cell membrane. It catalyses the reaction D-ribose(out) + ATP + H2O = D-ribose(in) + ADP + phosphate + H(+). Its function is as follows. Part of the ABC transporter complex RbsABC involved in ribose import. Responsible for energy coupling to the transport system. The sequence is that of Ribose import ATP-binding protein RbsA 2 from Rubrobacter xylanophilus (strain DSM 9941 / JCM 11954 / NBRC 16129 / PRD-1).